Here is a 34-residue protein sequence, read N- to C-terminus: Photosystem II reaction center protein Y (34 aa).

Over 1–5 the chain is Lumenal; that stretch reads DWRVL. The helical transmembrane segment at 6–22 threads the bilayer; sequence VVLLPVLLAAGWAVRNI. Residues 23-34 lie on the Cytoplasmic side of the membrane; sequence LPYAVKQVQKLL.

The protein belongs to the PsbY family. PSII is composed of 1 copy each of membrane proteins PsbA, PsbB, PsbC, PsbD, PsbE, PsbF, PsbH, PsbI, PsbJ, PsbK, PsbL, PsbM, PsbT, PsbX, PsbY, PsbZ, Psb30/Ycf12, peripheral proteins PsbO, CyanoQ (PsbQ), PsbU, PsbV and a large number of cofactors. It forms dimeric complexes. This protein is only loosely associated with PSII, and is not often found in crystals. PSII binds multiple chlorophylls, carotenoids and specific lipids. serves as cofactor.

It localises to the cellular thylakoid membrane. Loosely associated component of the core of photosystem II (PSII). PSII is a light-driven water plastoquinone oxidoreductase, using light energy to abstract electrons from H(2)O, generating a proton gradient subsequently used for ATP formation. In Thermostichus vulcanus (Synechococcus vulcanus), this protein is Photosystem II reaction center protein Y.